A 40-amino-acid polypeptide reads, in one-letter code: Dolichyl-diphosphooligosaccharide--protein glycosyltransferase subunit 4 (40 aa).

At 1 to 4 (MITD) the chain is on the lumenal side. The helical transmembrane segment at 5-25 (VQLAIFSNVLGVFLFLLVVAY) threads the bilayer. The Cytoplasmic portion of the chain corresponds to 26 to 40 (HYINANTGKIGPKAK).

This sequence belongs to the OST4 family. In terms of assembly, component of the oligosaccharyltransferase (OST) complex.

It localises to the endoplasmic reticulum membrane. Subunit of the oligosaccharyl transferase (OST) complex that catalyzes the initial transfer of a defined glycan (Glc(3)Man(9)GlcNAc(2) in eukaryotes) from the lipid carrier dolichol-pyrophosphate to an asparagine residue within an Asn-X-Ser/Thr consensus motif in nascent polypeptide chains, the first step in protein N-glycosylation. N-glycosylation occurs cotranslationally and the complex associates with the Sec61 complex at the channel-forming translocon complex that mediates protein translocation across the endoplasmic reticulum (ER). All subunits are required for a maximal enzyme activity. The polypeptide is Dolichyl-diphosphooligosaccharide--protein glycosyltransferase subunit 4 (Drosophila willistoni (Fruit fly)).